The primary structure comprises 236 residues: Lipoprotein B (236 aa).

The first 27 residues, 1 to 27 (MNKKYFKKYSSILIFSMSILAPMTLAS), serve as a signal peptide directing secretion. The N-palmitoyl cysteine moiety is linked to residue cysteine 28. Cysteine 28 carries S-diacylglycerol cysteine lipidation. 2 disordered regions span residues 35 to 112 (EKDK…KSNV) and 134 to 236 (SEKQ…GDAF). Over residues 43–60 (STNLSEPNKSNTSKTNTF) the composition is skewed to polar residues. Over residues 61 to 74 (QDKKDSTNKIDSQE) the composition is skewed to basic and acidic residues. Composition is skewed to polar residues over residues 75 to 112 (SSKT…KSNV) and 143 to 157 (NASS…NTLK). A compositionally biased stretch (basic and acidic residues) spans 158 to 175 (NQDKTKQENDQFKQESKD). The span at 193-212 (VISSQSTTRLEMPKNDQSNS) shows a compositional bias: polar residues. Basic and acidic residues predominate over residues 215-228 (EDNKKSPESPKWWE).

Belongs to the M.pulmonis LipAB lipoprotein family.

It localises to the cell membrane. In Mycoplasmopsis pulmonis (strain UAB CTIP) (Mycoplasma pulmonis), this protein is Lipoprotein B (lipB).